The primary structure comprises 186 residues: Adrenodoxin, mitochondrial (186 aa).

Residues 1–58 constitute a mitochondrion transit peptide; the sequence is MAARLLRVASAALGDTAGRWRLLARPRAGAGGLRGSRGPGLGGGAVATRTLSVSGRAQ. Serine 61 carries the phosphoserine modification. Lysine 64 carries the N6-acetyllysine; alternate modification. At lysine 64 the chain carries N6-succinyllysine; alternate. The region spanning 65–169 is the 2Fe-2S ferredoxin-type domain; the sequence is ITVHFINRDG…NMTVRVPDAV (105 aa). Positions 104, 110, 113, and 150 each coordinate [2Fe-2S] cluster. Residue lysine 156 is modified to N6-succinyllysine. A Phosphoserine modification is found at serine 175.

The protein belongs to the adrenodoxin/putidaredoxin family. In terms of assembly, interacts with CYP11A1. [2Fe-2S] cluster serves as cofactor. In terms of tissue distribution, detected in adrenal cortex and corpus luteum (at protein level).

The protein localises to the mitochondrion matrix. Essential for the synthesis of various steroid hormones. Participates in the reduction of mitochondrial cytochrome P450 for steroidogenesis. Transfers electrons from adrenodoxin reductase to CYP11A1, a cytochrome P450 that catalyzes cholesterol side-chain cleavage to produce pregnenolone, the precursor of most steroid hormones. Does not form a ternary complex with adrenodoxin reductase and CYP11A1 but shuttles between the two enzymes to transfer electrons. The sequence is that of Adrenodoxin, mitochondrial (FDX1) from Bos taurus (Bovine).